A 606-amino-acid polypeptide reads, in one-letter code: UvrABC system protein C (606 aa).

Residues 14-93 (QNPGVYLMKD…IKKHSPRYNV (80 aa)) form the GIY-YIG domain. The 36-residue stretch at 203 to 238 (PDLINRLKFEMQTEADLEHFERAAQIRDTILAIQTT) folds into the UVR domain.

Belongs to the UvrC family. As to quaternary structure, interacts with UvrB in an incision complex.

Its subcellular location is the cytoplasm. Its function is as follows. The UvrABC repair system catalyzes the recognition and processing of DNA lesions. UvrC both incises the 5' and 3' sides of the lesion. The N-terminal half is responsible for the 3' incision and the C-terminal half is responsible for the 5' incision. The polypeptide is UvrABC system protein C (Desulforapulum autotrophicum (strain ATCC 43914 / DSM 3382 / VKM B-1955 / HRM2) (Desulfobacterium autotrophicum)).